Reading from the N-terminus, the 151-residue chain is Probable cGMP 3',5'-cyclic phosphodiesterase subunit delta (151 aa).

This sequence belongs to the PDE6D/unc-119 family. Interacts with Pde6.

It is found in the nucleus. The protein localises to the cytoplasm. This chain is Probable cGMP 3',5'-cyclic phosphodiesterase subunit delta, found in Drosophila erecta (Fruit fly).